A 471-amino-acid chain; its full sequence is uncharacterized protein (471 aa).

4 helical membrane-spanning segments follow: residues 10 to 30 (ALWLLDFLTFNISFLLSLFVI), 46 to 66 (IDDRTYIHAVLAGICVGWFAI), 87 to 107 (TLIIFAIFELAIVAFPKLYFS), and 280 to 300 (IVVGSLAIIIFSPVLLYLYFA).

This sequence belongs to the bacterial sugar transferase family.

It is found in the cell membrane. It functions in the pathway glycan metabolism; exopolysaccharide biosynthesis. Functionally, may function as a sugar transferase. This is an uncharacterized protein from Haemophilus influenzae (strain ATCC 51907 / DSM 11121 / KW20 / Rd).